We begin with the raw amino-acid sequence, 245 residues long: Ubiquinone biosynthesis O-methyltransferase (245 aa).

Residues Arg-44, Gly-64, Asp-85, and Met-129 each coordinate S-adenosyl-L-methionine.

Belongs to the methyltransferase superfamily. UbiG/COQ3 family.

It carries out the reaction a 3-demethylubiquinol + S-adenosyl-L-methionine = a ubiquinol + S-adenosyl-L-homocysteine + H(+). The enzyme catalyses a 3-(all-trans-polyprenyl)benzene-1,2-diol + S-adenosyl-L-methionine = a 2-methoxy-6-(all-trans-polyprenyl)phenol + S-adenosyl-L-homocysteine + H(+). It functions in the pathway cofactor biosynthesis; ubiquinone biosynthesis. O-methyltransferase that catalyzes the 2 O-methylation steps in the ubiquinone biosynthetic pathway. In Proteus mirabilis (strain HI4320), this protein is Ubiquinone biosynthesis O-methyltransferase.